Reading from the N-terminus, the 132-residue chain is Small ribosomal subunit protein uS8 (132 aa).

Belongs to the universal ribosomal protein uS8 family. In terms of assembly, part of the 30S ribosomal subunit. Contacts proteins S5 and S12.

Its function is as follows. One of the primary rRNA binding proteins, it binds directly to 16S rRNA central domain where it helps coordinate assembly of the platform of the 30S subunit. This is Small ribosomal subunit protein uS8 from Caldicellulosiruptor bescii (strain ATCC BAA-1888 / DSM 6725 / KCTC 15123 / Z-1320) (Anaerocellum thermophilum).